We begin with the raw amino-acid sequence, 261 residues long: Thioredoxin-like protein HCF164, chloroplastic (261 aa).

A chloroplast-targeting transit peptide spans 1-40 (MARLVFSLNLPSSHGFNLSPRNLQSFFVTQTGAPRFRAVR). Residues 39-91 (VRCKPNPESSETKQEKLVIDNGETSSASKEVESSSSVADSSSSSSSGFPESPN) are disordered. Residues 63–84 (SSASKEVESSSSVADSSSSSSS) show a composition bias toward low complexity. Positions 101-229 (VTVIAALSLF…LVENVNALAA (129 aa)) constitute a Thioredoxin domain. Residues C150 and C153 each act as nucleophile in the active site. A disulfide bond links C150 and C153.

Belongs to the thioredoxin family. In terms of assembly, interacts in vitro with LTO1.

The protein localises to the plastid. The protein resides in the chloroplast thylakoid membrane. In terms of biological role, thiol-disulfide oxidoreductase that participates in various redox reactions in the chloroplast. Mediates the reduction of PSI-N in the thylakoid lumen. May interact and probably reduce other target proteins of the thylakoid membrane, such as FTSH2, FTSH8, LHCB5, atpA, atpB, atpE, petA and petC. Involved in the biogenesis of the plastid cytochrome b6f complex. Reducing equivalents are provided by stromal M-type thioredoxins and probably transduced through the thylakoid membrane by CCDA. Possesses low insulin disulfide bonds reducing activity. The chain is Thioredoxin-like protein HCF164, chloroplastic from Arabidopsis thaliana (Mouse-ear cress).